The following is a 320-amino-acid chain: ATP synthase gamma chain (320 aa).

Belongs to the ATPase gamma chain family. F-type ATPases have 2 components, CF(1) - the catalytic core - and CF(0) - the membrane proton channel. CF(1) has five subunits: alpha(3), beta(3), gamma(1), delta(1), epsilon(1). CF(0) has three main subunits: a, b and c.

The protein localises to the cell membrane. Functionally, produces ATP from ADP in the presence of a proton gradient across the membrane. The gamma chain is believed to be important in regulating ATPase activity and the flow of protons through the CF(0) complex. This is ATP synthase gamma chain from Lactobacillus helveticus (strain DPC 4571).